We begin with the raw amino-acid sequence, 363 residues long: L-arabinitol 4-dehydrogenase (363 aa).

The Zn(2+) site is built by Cys-53, His-78, Glu-79, Cys-108, Cys-111, Cys-114, Cys-122, and Glu-163. Residues 190–191 (PI), Asp-211, Arg-216, Ile-282, and 306–308 (QYR) each bind NAD(+).

This sequence belongs to the zinc-containing alcohol dehydrogenase family. Homotetramer. Zn(2+) is required as a cofactor.

It catalyses the reaction L-arabinitol + NAD(+) = L-xylulose + NADH + H(+). Its pathway is carbohydrate degradation; L-arabinose degradation via L-arabinitol; D-xylulose 5-phosphate from L-arabinose (fungal route): step 2/5. In terms of biological role, catalyzes the NAD-dependent oxidation of L-arabinitol to L-xylulose in the fungal L-arabinose catabolic pathway. L-arabinose catabolism is important for using plant material as a carbon source. Not active on D-arabinitol, D-sorbitol and D-mannitol. This Neurospora crassa (strain ATCC 24698 / 74-OR23-1A / CBS 708.71 / DSM 1257 / FGSC 987) protein is L-arabinitol 4-dehydrogenase (ard-1).